A 117-amino-acid polypeptide reads, in one-letter code: uncharacterized protein (117 aa).

Residues 1-20 (METKKLIGKPLQPARPVRHL) are disordered.

This is an uncharacterized protein from Homo sapiens (Human).